Here is a 417-residue protein sequence, read N- to C-terminus: 2-oxoglutarate and iron-dependent oxygenase JMJD4 (417 aa).

The JmjC domain maps to 142 to 301; it reads CRDFPVEDVF…NMWRFLQQEL (160 aa). Fe cation-binding residues include histidine 189, aspartate 191, and histidine 269.

The protein belongs to the JMJD6 family. As to quaternary structure, interacts with ETF1. Interacts with the ETF1-GSPT1 complex. Fe(2+) is required as a cofactor.

It localises to the cytoplasm. The enzyme catalyses L-lysyl-[protein] + 2-oxoglutarate + O2 = 4-hydroxy-L-lysyl-[protein] + succinate + CO2. Its function is as follows. Catalyzes the 2-oxoglutarate and iron-dependent C4-lysyl hydroxylation of ETF1 at 'Lys-63' thereby promoting the translational termination efficiency of ETF1. The sequence is that of 2-oxoglutarate and iron-dependent oxygenase JMJD4 (JMJD4) from Homo sapiens (Human).